Here is a 439-residue protein sequence, read N- to C-terminus: tRNA-2-methylthio-N(6)-dimethylallyladenosine synthase (439 aa).

Residues 1–117 (MKFYIRTFGC…IGNLVKRALN (117 aa)) form the MTTase N-terminal domain. [4Fe-4S] cluster is bound by residues Cys-10, Cys-46, Cys-80, Cys-153, Cys-157, and Cys-160. The 233-residue stretch at 139-371 (PISKHHAWIT…MELQKRINLE (233 aa)) folds into the Radical SAM core domain. A TRAM domain is found at 369 to 436 (NLEENEKYLE…PGPLYGEVVN (68 aa)).

This sequence belongs to the methylthiotransferase family. MiaB subfamily. In terms of assembly, monomer. The cofactor is [4Fe-4S] cluster.

It localises to the cytoplasm. The enzyme catalyses N(6)-dimethylallyladenosine(37) in tRNA + (sulfur carrier)-SH + AH2 + 2 S-adenosyl-L-methionine = 2-methylsulfanyl-N(6)-dimethylallyladenosine(37) in tRNA + (sulfur carrier)-H + 5'-deoxyadenosine + L-methionine + A + S-adenosyl-L-homocysteine + 2 H(+). Its function is as follows. Catalyzes the methylthiolation of N6-(dimethylallyl)adenosine (i(6)A), leading to the formation of 2-methylthio-N6-(dimethylallyl)adenosine (ms(2)i(6)A) at position 37 in tRNAs that read codons beginning with uridine. This chain is tRNA-2-methylthio-N(6)-dimethylallyladenosine synthase, found in Petrotoga mobilis (strain DSM 10674 / SJ95).